The sequence spans 265 residues: Anamorsin homolog 1 (265 aa).

The N-terminal SAM-like domain stretch occupies residues 1 to 143 (MAATAAAALA…KASWSMGSSF (143 aa)). Residues 144–175 (PLKKATKGLPKIQIDDDSELIDEDSLLTEDDL) are linker. [2Fe-2S] cluster-binding residues include Cys186, Cys195, Cys198, and Cys200. The tract at residues 186 to 200 (CEVGATRKACKNCTC) is fe-S binding site A. [4Fe-4S] cluster contacts are provided by Cys226, Cys229, Cys237, and Cys240. Short sequence motifs (cx2C motif) lie at residues 226–229 (CGNC) and 237–240 (CGTC). The tract at residues 226–240 (CGNCGLGDAFRCGTC) is fe-S binding site B.

This sequence belongs to the anamorsin family. In terms of assembly, monomer. The cofactor is [2Fe-2S] cluster. Requires [4Fe-4S] cluster as cofactor.

It localises to the cytoplasm. The protein localises to the mitochondrion intermembrane space. Component of the cytosolic iron-sulfur (Fe-S) protein assembly (CIA) machinery. Required for the maturation of extramitochondrial Fe-S proteins. Part of an electron transfer chain functioning in an early step of cytosolic Fe-S biogenesis, facilitating the de novo assembly of a [4Fe-4S] cluster on the cytosolic Fe-S scaffold complex. Electrons are transferred from NADPH via a FAD- and FMN-containing diflavin oxidoreductase. Together with the diflavin oxidoreductase, also required for the assembly of the diferric tyrosyl radical cofactor of ribonucleotide reductase (RNR), probably by providing electrons for reduction during radical cofactor maturation in the catalytic small subunit. This Oryza sativa subsp. indica (Rice) protein is Anamorsin homolog 1.